The following is a 486-amino-acid chain: Amyloid-beta A4 precursor protein-binding family B member 3 (486 aa).

Residues 29-61 (TGLPPGWRKIRDAAGTYYWHVPSGSTQWQRPTW) form the WW domain. 2 PID domains span residues 113–280 (EPGA…QVEL) and 285–440 (SQAA…RTSS). Residues 438-460 (TSSMDSPGGPLPPPLLKGGAGGA) are disordered.

In terms of assembly, interacts with APP (via intracellular domain). Interacts with APLP1 and APLP2 (via intracellular domain).

The protein resides in the cytoplasm. The protein localises to the nucleus. Functionally, may modulate the internalization of amyloid-beta precursor protein. This is Amyloid-beta A4 precursor protein-binding family B member 3 from Mus musculus (Mouse).